The sequence spans 239 residues: Norbelladine 4'-O-methyltransferase 2 (239 aa).

Residues Val55, Glu77, 79–80 (GV), Ser85, Asp103, and Ala132 contribute to the S-adenosyl-L-methionine site. Asp155 is a binding site for a divalent metal cation. Residue Asp157 participates in S-adenosyl-L-methionine binding. A divalent metal cation-binding residues include Asp181 and Asn182.

It belongs to the class I-like SAM-binding methyltransferase superfamily. Cation-dependent O-methyltransferase family. Mg(2+) is required as a cofactor.

The catalysed reaction is norbelladine + S-adenosyl-L-methionine = 4'-O-methylnorbelladine + S-adenosyl-L-homocysteine + H(+). It participates in alkaloid biosynthesis. Functionally, 4'-O-methyltransferase converting norbelladine to 4'-O-methylnorbelladine. 4'-O-methylnorbelladine is a precursor to all Amaryllidaceae alkaloids such as galanthamine, lycorine and haemanthamine, and including haemanthamine- and crinamine-type alkaloids, promising anticancer agents. The polypeptide is Norbelladine 4'-O-methyltransferase 2 (Narcissus aff. pseudonarcissus MK-2014 (Daffodil)).